A 153-amino-acid polypeptide reads, in one-letter code: uncharacterized protein (153 aa).

3 helical membrane-spanning segments follow: residues 17-37 (ITLI…SMFF), 44-64 (FLLC…IGMG), and 118-138 (FVFI…TLII).

The protein to M.jannaschii MJ0129 and MJ0554.

It localises to the cell membrane. This is an uncharacterized protein from Methanocaldococcus jannaschii (strain ATCC 43067 / DSM 2661 / JAL-1 / JCM 10045 / NBRC 100440) (Methanococcus jannaschii).